Reading from the N-terminus, the 106-residue chain is Prothymosin alpha-B (106 aa).

Residues 1-39 (MADAKVDSATEISAKDLKEKKLIEEKENGKDATNGKENE) show a composition bias toward basic and acidic residues. A disordered region spans residues 1-106 (MADAKVDSAT…DVDPKKQKVN (106 aa)). S8 bears the Phosphoserine mark. T10 is subject to Phosphothreonine. Acidic residues-rich tracts occupy residues 40-76 (ENGE…DEDL) and 85-98 (DDDE…EDDV).

The protein belongs to the pro/parathymosin family. Uniformly expressed in all embryonic cells at 4 and 8 hpf. At the 20-somite stage (18 hpf), ubiquitously expressed in the developing nervous system, in the tail bud and in the pronephric ducts. Also expressed in some placodes, including the anterior lateral line placode, otic vesicle and olfactory placode. At 27 hpf, strong expression persists in the central nervous system and the olfactory placode. Expressed strongly in the eyes and the pectoral fin buds. In the tail region, expressed in the spinal cord, in the posterior lateral line precursors, and persists in the pronephric ducts. At 48 hpf, expressed in all head territories including the developing brain, eyes, and pharyngeal arches. More caudally, expression persists in the pectoral fin buds, the spinal cord and, for the first time, appears in the intestine. At 72 hpf, expressed only in restricted regions of the brain, in pharyngeal arches region and in the amacrine cells and the horizontal cells of the retina.

The protein localises to the nucleus. In Danio rerio (Zebrafish), this protein is Prothymosin alpha-B.